A 336-amino-acid polypeptide reads, in one-letter code: Type II methyltransferase M.PvuII (336 aa).

Repeat copies occupy residues 11-113 (SNDM…IYNF) and 181-293 (SDRM…WISF). The interval 196–215 (TPKTRPSGHDIGKSFSKDNG) is disordered. The segment covering 202 to 211 (SGHDIGKSFS) has biased composition (basic and acidic residues).

This sequence belongs to the N(4)/N(6)-methyltransferase family. N(4) subfamily. In terms of assembly, monomer.

The enzyme catalyses a 2'-deoxycytidine in DNA + S-adenosyl-L-methionine = an N(4)-methyl-2'-deoxycytidine in DNA + S-adenosyl-L-homocysteine + H(+). Its function is as follows. A beta subtype methylase, recognizes the double-stranded sequence 5'-CAGCTG-3', methylates C-4 on both strands, and protects the DNA from cleavage by the PvuII endonuclease. In Proteus hauseri, this protein is Type II methyltransferase M.PvuII.